Reading from the N-terminus, the 245-residue chain is 2,3-bisphosphoglycerate-dependent phosphoglycerate mutase (245 aa).

Residues 8-15 (RHGQSLWN), 21-22 (TG), Arg60, 87-90 (ERHY), Lys98, 114-115 (RR), and 183-184 (GN) each bind substrate. The active-site Tele-phosphohistidine intermediate is His9. Glu87 acts as the Proton donor/acceptor in catalysis.

The protein belongs to the phosphoglycerate mutase family. BPG-dependent PGAM subfamily.

The enzyme catalyses (2R)-2-phosphoglycerate = (2R)-3-phosphoglycerate. The protein operates within carbohydrate degradation; glycolysis; pyruvate from D-glyceraldehyde 3-phosphate: step 3/5. Functionally, catalyzes the interconversion of 2-phosphoglycerate and 3-phosphoglycerate. The sequence is that of 2,3-bisphosphoglycerate-dependent phosphoglycerate mutase from Bacillus cereus (strain ZK / E33L).